Reading from the N-terminus, the 82-residue chain is Turripeptide OL139 (82 aa).

Residues 58–82 (HRTTRDTADKTHGGSQRDRFFQSIA) are disordered.

Contains 6 disulfide bonds. In terms of tissue distribution, expressed by the venom duct.

It is found in the secreted. In terms of biological role, acts as a neurotoxin by inhibiting an ion channel. In Iotyrris olangoensis (Sea snail), this protein is Turripeptide OL139.